Reading from the N-terminus, the 259-residue chain is DNA-directed RNA polymerase 30 kDa polypeptide (259 aa).

The TFIIS-type zinc finger occupies 155 to 195 (YNTPCPNCKSRNTTPMMIQTRAADEPPLVRHACRDCKQHFK). The Zn(2+) site is built by Cys-159, Cys-162, Cys-187, and Cys-190. The tract at residues 214–259 (ENKEITEILPDNNPSPPESPEPASPIDDGLIRSTFDRNDEPPEDDE) is disordered. Pro residues predominate over residues 226–236 (NPSPPESPEPA).

The protein belongs to the poxviridae DNA-directed RNA polymerase 30 kDa subunit family. In terms of assembly, the DNA-dependent RNA polymerase (vRNAP) consists of eight subunits encoded by early viral genes and termed according to their apparent molecular masses Rpo147, Rpo132, Rpo35, Rpo30, Rpo22, Rpo19, Rpo18, and Rpo7. The same holoenzyme, with the addition of the transcription-specificity factor RAP94, is used for early gene expression.

The protein localises to the virion. The protein resides in the host cytoplasm. The enzyme catalyses RNA(n) + a ribonucleoside 5'-triphosphate = RNA(n+1) + diphosphate. Functionally, part of the DNA-dependent RNA polymerase which catalyzes the transcription of viral DNA into RNA using the four ribonucleoside triphosphates as substrates. Responsible for the transcription of early, intermediate and late genes. DNA-dependent RNA polymerase associates with the early transcription factor (ETF), itself composed of OPG118/D6 and OPG134/A8, thereby allowing the early genes transcription. Late transcription, and probably also intermediate transcription, require newly synthesized RNA polymerase. This chain is DNA-directed RNA polymerase 30 kDa polypeptide (OPG066), found in Homo sapiens (Human).